The sequence spans 128 residues: Glycine cleavage system H protein (128 aa).

The 83-residue stretch at 22–104 (TVLVGITDYA…YGEGWIFRLK (83 aa)) folds into the Lipoyl-binding domain. Residue lysine 63 is modified to N6-lipoyllysine.

Belongs to the GcvH family. In terms of assembly, the glycine cleavage system is composed of four proteins: P, T, L and H. (R)-lipoate is required as a cofactor.

Functionally, the glycine cleavage system catalyzes the degradation of glycine. The H protein shuttles the methylamine group of glycine from the P protein to the T protein. The protein is Glycine cleavage system H protein of Thermus thermophilus (strain ATCC BAA-163 / DSM 7039 / HB27).